The primary structure comprises 238 residues: MEEQDARVPALEPFRVEQAPPLIYYVPDFISKEEEEYLLRQVFNAPKPKWTQLSGRKLQNWGGLPHPRGMVPERLPPWLQRYVDKVSDLSLFGGLPANHVLVNQYLPGEGIMPHEDGPLYYPTVSTISLGSHTVLDFYEPRQPDDDVPMEQPRPPQRPITSLLVEPRSLLVLRGTAYTRLLHGISATRVDELDATSLPPNATACKSALPGAHLVRGTRVSLTIRRVPRVLRASLLLSK.

Residues Pro96 to Pro227 form the Fe2OG dioxygenase domain. 2-oxoglutarate is bound by residues Asn103 and Tyr105. Fe cation contacts are provided by His114, Asp116, and His182. 2-oxoglutarate-binding residues include Arg218 and Ser220.

This sequence belongs to the alkB family. As to quaternary structure, interacts with VCPKMT. The cofactor is Fe(2+).

The protein resides in the cytoplasm. It localises to the nucleus. Functionally, probable Fe(2+)/2-oxoglutarate-dependent dioxygenase involved in oxidative demethylation of nucleic acids. Binds nucleic acids with a preference for ssDNA or ssRNA to other types of DNAs. May play a role in nucleic acid damage repair. This Mus musculus (Mouse) protein is Probable RNA/DNA demethylase ALKBH6 (Alkbh6).